The following is a 259-amino-acid chain: Protein-L-isoaspartate O-methyltransferase (259 aa).

The tract at residues 1-25 (MRKRVDPPAGGRLAPGITPANSNTR) is disordered. Ser107 is a catalytic residue.

Belongs to the methyltransferase superfamily. L-isoaspartyl/D-aspartyl protein methyltransferase family.

The protein resides in the cytoplasm. It catalyses the reaction [protein]-L-isoaspartate + S-adenosyl-L-methionine = [protein]-L-isoaspartate alpha-methyl ester + S-adenosyl-L-homocysteine. In terms of biological role, catalyzes the methyl esterification of L-isoaspartyl residues in peptides and proteins that result from spontaneous decomposition of normal L-aspartyl and L-asparaginyl residues. It plays a role in the repair and/or degradation of damaged proteins. This chain is Protein-L-isoaspartate O-methyltransferase, found in Bordetella bronchiseptica (strain ATCC BAA-588 / NCTC 13252 / RB50) (Alcaligenes bronchisepticus).